The primary structure comprises 509 residues: DEAD-box ATP-dependent RNA helicase CshA (509 aa).

Positions 2 to 30 match the Q motif motif; sequence QNFKELGISDKTVQTLEAMGFKEPTPIQK. Residues 33–203 enclose the Helicase ATP-binding domain; that stretch reads IPYALEGDDI…QQFMKAPKII (171 aa). 46-53 contacts ATP; it reads AQTGTGKT. The DEAD box motif lies at 150–153; the sequence is DEAD. The 162-residue stretch at 214-375 folds into the Helicase C-terminal domain; it reads QIDEYYTIVK…LRPPHRKEVL (162 aa). 2 stretches are compositionally biased toward basic residues: residues 440–459 and 467–482; these read ARKN…KRGN and RRSK…KKNQ. A disordered region spans residues 440–509; it reads ARKNRSSKGG…KGRTFADHQK (70 aa). Positions 483–492 are enriched in basic and acidic residues; the sequence is KKFDRRDKQQ.

The protein belongs to the DEAD box helicase family. CshA subfamily. As to quaternary structure, oligomerizes, may be a member of the RNA degradosome.

The protein resides in the cytoplasm. The enzyme catalyses ATP + H2O = ADP + phosphate + H(+). Its function is as follows. DEAD-box RNA helicase possibly involved in RNA degradation. Unwinds dsRNA in both 5'- and 3'-directions, has RNA-dependent ATPase activity. The protein is DEAD-box ATP-dependent RNA helicase CshA of Staphylococcus epidermidis (strain ATCC 12228 / FDA PCI 1200).